We begin with the raw amino-acid sequence, 99 residues long: uncharacterized protein (99 aa).

This is an uncharacterized protein from Vibrio alginolyticus.